Reading from the N-terminus, the 283-residue chain is MKLIHDVQEMQQTVLGLKRQGKRIAFVPTMGFLHEGHASLMREGRTRGDVLVLSIFVNPTQFGINEDLASYPRNLEGDCALAESCGVDLVFAPTAAGMYPPGFQTTVALGPLTKPLCGASRPGHFDGVAVVVTKLFGIVQPDCALFGKKDFQQLAIIRQMTLDLNLPVEIIGMPIVREPDGLAMSSRNSYLSVEQRQQALCLHRAILKVRELFKGGETSVDRLLGEARMIITAVPEASVDYLELRDSTTLEPVATAAADSLFALAVKIGSTRLIDNTVLGDTP.

M30–H37 provides a ligand contact to ATP. The active-site Proton donor is the H37. Q61 lines the (R)-pantoate pocket. Q61 is a beta-alanine binding site. G147 to D150 is a binding site for ATP. A (R)-pantoate-binding site is contributed by Q153. ATP is bound by residues V176 and M184–R187.

The protein belongs to the pantothenate synthetase family. Homodimer.

The protein resides in the cytoplasm. The enzyme catalyses (R)-pantoate + beta-alanine + ATP = (R)-pantothenate + AMP + diphosphate + H(+). It participates in cofactor biosynthesis; (R)-pantothenate biosynthesis; (R)-pantothenate from (R)-pantoate and beta-alanine: step 1/1. Functionally, catalyzes the condensation of pantoate with beta-alanine in an ATP-dependent reaction via a pantoyl-adenylate intermediate. This is Pantothenate synthetase from Trichlorobacter lovleyi (strain ATCC BAA-1151 / DSM 17278 / SZ) (Geobacter lovleyi).